A 417-amino-acid chain; its full sequence is Gelsolin (417 aa).

Residues 93–171 form a Gelsolin-like 4 repeat; sequence KVPVLESHYG…VVQGKEPAHL (79 aa). 13 residues coordinate Ca(2+): glycine 107, aspartate 108, glutamate 138, aspartate 150, glycine 155, proline 157, threonine 187, asparagine 227, aspartate 228, glutamate 250, aspartate 331, aspartate 332, and glutamate 354. 2 Gelsolin-like repeats span residues 213–261 and 316–392; these read RAVE…LKIL and IEEV…PTFI.

Belongs to the villin/gelsolin family.

The protein resides in the cytoplasm. The protein localises to the cytoskeleton. In terms of biological role, calcium-regulated, actin-modulating protein that binds to the plus (or barbed) ends of actin monomers or filaments, preventing monomer exchange (end-blocking or capping). It can promote the assembly of monomers into filaments (nucleation) as well as sever filaments already formed. Plays a role in ciliogenesis. The polypeptide is Gelsolin (gsn) (Xenopus laevis (African clawed frog)).